A 600-amino-acid polypeptide reads, in one-letter code: UvrABC system protein C (600 aa).

The 86-residue stretch at 15–100 (NSAGVYEYFN…IKQLHPKYNI (86 aa)) folds into the GIY-YIG domain. The UVR domain maps to 203-238 (SVLLKNLEKQMLVLAQNENYEEAAKIRDQIATIKDL).

This sequence belongs to the UvrC family. In terms of assembly, interacts with UvrB in an incision complex.

It is found in the cytoplasm. The UvrABC repair system catalyzes the recognition and processing of DNA lesions. UvrC both incises the 5' and 3' sides of the lesion. The N-terminal half is responsible for the 3' incision and the C-terminal half is responsible for the 5' incision. This chain is UvrABC system protein C, found in Campylobacter jejuni subsp. doylei (strain ATCC BAA-1458 / RM4099 / 269.97).